We begin with the raw amino-acid sequence, 428 residues long: UPF0053 inner membrane protein YfjD (428 aa).

Topologically, residues 1–3 (MEH) are cytoplasmic. The 191-residue stretch at 2–192 (EHISTTTLII…SQISRRNQDM (191 aa)) folds into the CNNM transmembrane domain. Residues 4-24 (ISTTTLIIILIIMVVISAYFS) form a helical membrane-spanning segment. The Periplasmic portion of the chain corresponds to 25–64 (GSETGMMTLNRYRLRHMAKQGNRSAKRVEKLLRKPDRLIS). A helical transmembrane segment spans residues 65–85 (LVLIGNNLVNILASALGTIVG). The Cytoplasmic portion of the chain corresponds to 86–91 (MRLYGD). The chain crosses the membrane as a helical span at residues 92 to 112 (AGVAIATGVLTFVVLVFAEVL). Residues 113–129 (PKTIAALYPEKVAYPSS) lie on the Periplasmic side of the membrane. A helical membrane pass occupies residues 130–150 (FLLAPLQILMMPLVWLLNAIT). The Cytoplasmic segment spans residues 151–428 (RMLMRMMGIK…VKPLRESVAE (278 aa)). CBS domains are found at residues 208-270 (MVPR…FTKE) and 272-332 (MLRA…FTTS).

The protein belongs to the UPF0053 family.

It localises to the cell inner membrane. This chain is UPF0053 inner membrane protein YfjD (yfjD), found in Escherichia coli (strain K12).